We begin with the raw amino-acid sequence, 323 residues long: Aspartate carbamoyltransferase catalytic subunit (323 aa).

Arginine 71 and threonine 72 together coordinate carbamoyl phosphate. L-aspartate is bound at residue lysine 99. Arginine 121, histidine 151, and glutamine 154 together coordinate carbamoyl phosphate. 2 residues coordinate L-aspartate: arginine 184 and arginine 239. Residues glycine 280 and proline 281 each coordinate carbamoyl phosphate.

This sequence belongs to the aspartate/ornithine carbamoyltransferase superfamily. ATCase family. In terms of assembly, heterododecamer (2C3:3R2) of six catalytic PyrB chains organized as two trimers (C3), and six regulatory PyrI chains organized as three dimers (R2).

The catalysed reaction is carbamoyl phosphate + L-aspartate = N-carbamoyl-L-aspartate + phosphate + H(+). It functions in the pathway pyrimidine metabolism; UMP biosynthesis via de novo pathway; (S)-dihydroorotate from bicarbonate: step 2/3. In terms of biological role, catalyzes the condensation of carbamoyl phosphate and aspartate to form carbamoyl aspartate and inorganic phosphate, the committed step in the de novo pyrimidine nucleotide biosynthesis pathway. This is Aspartate carbamoyltransferase catalytic subunit from Cupriavidus metallidurans (strain ATCC 43123 / DSM 2839 / NBRC 102507 / CH34) (Ralstonia metallidurans).